The sequence spans 23 residues: Dermaseptin III-like peptide (23 aa).

As to expression, expressed by the skin glands.

The protein resides in the secreted. Its function is as follows. Possesses a potent antimicrobial activity against bacteria, fungi and protozoa. Probably acts by disturbing membrane functions with its amphipathic structure. The chain is Dermaseptin III-like peptide from Phyllomedusa burmeisteri (Brazilian common walking leaf frog).